Here is a 115-residue protein sequence, read N- to C-terminus: Large ribosomal subunit protein bL20c (115 aa).

It belongs to the bacterial ribosomal protein bL20 family.

Its subcellular location is the plastid. The protein localises to the chloroplast. Binds directly to 23S ribosomal RNA and is necessary for the in vitro assembly process of the 50S ribosomal subunit. It is not involved in the protein synthesizing functions of that subunit. This is Large ribosomal subunit protein bL20c from Emiliania huxleyi (Coccolithophore).